We begin with the raw amino-acid sequence, 740 residues long: Transcription activator of gluconeogenesis NCU03938 (740 aa).

Residues 1–66 (MPDDVGPAEA…KYDPKDPLRP (66 aa)) form a disordered region. Over residues 19–37 (SDNEYDETEVTTKDDDDEK) the composition is skewed to acidic residues. Residues 52-65 (GDQKKKYDPKDPLR) are compositionally biased toward basic and acidic residues. Residues 75 to 103 (CYACQRAHLTCGDERPCQRCIKRGLAEAC) constitute a DNA-binding region (zn(2)-C6 fungal-type). Disordered regions lie at residues 333-405 (PAGP…RQRD), 532-579 (NSDT…KEQP), and 639-674 (APTA…PTGV). Residues 337 to 351 (TSLQSPSTENNSPQP) are compositionally biased toward polar residues. Residues 475 to 546 (ALFEHEEFMH…SISSKGGRGG (72 aa)) form the PAS domain. Over residues 639–658 (APTASGGSGSSNGTVVNGGP) the composition is skewed to low complexity.

This sequence belongs to the ERT1/acuK family.

The protein localises to the nucleus. In terms of biological role, transcription factor which regulates nonfermentable carbon utilization. Activator of gluconeogenetic genes. In Neurospora crassa (strain ATCC 24698 / 74-OR23-1A / CBS 708.71 / DSM 1257 / FGSC 987), this protein is Transcription activator of gluconeogenesis NCU03938.